The following is an 88-amino-acid chain: Small ribosomal subunit protein bS20 (88 aa).

Residues 1–10 (MANHKSSLKR) are compositionally biased toward basic residues. Positions 1-24 (MANHKSSLKRAKQDIVRNTRNKSR) are disordered.

Belongs to the bacterial ribosomal protein bS20 family.

Binds directly to 16S ribosomal RNA. In Desulfosudis oleivorans (strain DSM 6200 / JCM 39069 / Hxd3) (Desulfococcus oleovorans), this protein is Small ribosomal subunit protein bS20.